The chain runs to 290 residues: S-adenosylmethionine-dependent nucleotide dehydratase (290 aa).

The Radical SAM core domain maps to 6–226 (SGNNIIPSVN…VNRHSKNKFL (221 aa)). [4Fe-4S] cluster-binding residues include cysteine 22, cysteine 26, and cysteine 29.

Belongs to the radical SAM superfamily. Viperin family. The cofactor is [4Fe-4S] cluster.

The enzyme catalyses UTP + AH2 + S-adenosyl-L-methionine = 3'-deoxy-3',4'-didehydro-UTP + 5'-deoxyadenosine + L-methionine + A + H2O + H(+). Expression of pVip47 in E.coli (strain MG1655) confers resistance to phage P1; has no effect against T7. Catalyzes the conversion of uridine triphosphate (UTP) to 3'-deoxy-3',4'-didehydro-UTP (ddhUTP), probably via a SAM-dependent radical mechanism. The modified nucleotide represses transcription from T7 RNA polymerase-directed genes (possibly by acting as chain terminators), strongly suggesting these nucleotides block viral polymerase transcription. How this protein allows bacteria to resist viruses that do not encode their own RNA polymerase (such as lambda, P1) is unknown. The sequence is that of S-adenosylmethionine-dependent nucleotide dehydratase from Flammeovirga pacifica.